We begin with the raw amino-acid sequence, 189 residues long: Small heat shock protein 21 (189 aa).

Residues 26–53 (PPNFNPRKIAQGDNGKGQQVSRYGAGAG) form a disordered region. Residues 77–183 (KYFVGFDDNV…HEKIVNIPIS (107 aa)) form the sHSP domain.

This sequence belongs to the small heat shock protein (HSP20) family.

Its function is as follows. Heat shock protein required for pathogenicity. Mediates thermotolerance and adaptation to oxidative stress and ethanol-induced stress. Required for invasive growth and filament formation under various filament inducing conditions. Plays a role in the capacity of damaging human-derived endothelial and oral epithelial cells during infection. Potentiates resistance to antifungal drugs, as well as resistance to killing by human neutrophils. Plays a major role in trehalose homeostasis in response to elevated temperatures. Regulates CEK1 activation by phosphorylation in response to elevated temperatures. This chain is Small heat shock protein 21 (HSP21), found in Candida albicans (strain SC5314 / ATCC MYA-2876) (Yeast).